The sequence spans 234 residues: Elongation factor Tu (234 aa).

In terms of domain architecture, tr-type G spans 1-125; sequence KNMITGAAQM…EVDAFIPTPE (125 aa). A GTP-binding site is contributed by 47 to 50; sequence NKQD.

The protein belongs to the TRAFAC class translation factor GTPase superfamily. Classic translation factor GTPase family. EF-Tu/EF-1A subfamily. As to quaternary structure, monomer.

It localises to the cytoplasm. It catalyses the reaction GTP + H2O = GDP + phosphate + H(+). Functionally, GTP hydrolase that promotes the GTP-dependent binding of aminoacyl-tRNA to the A-site of ribosomes during protein biosynthesis. The polypeptide is Elongation factor Tu (tufA) (Prochlorothrix hollandica).